The following is a 208-amino-acid chain: Large ribosomal subunit protein uL3 (208 aa).

N5-methylglutamine is present on Q149.

This sequence belongs to the universal ribosomal protein uL3 family. As to quaternary structure, part of the 50S ribosomal subunit. Forms a cluster with proteins L14 and L19. Methylated by PrmB.

One of the primary rRNA binding proteins, it binds directly near the 3'-end of the 23S rRNA, where it nucleates assembly of the 50S subunit. The protein is Large ribosomal subunit protein uL3 of Actinobacillus succinogenes (strain ATCC 55618 / DSM 22257 / CCUG 43843 / 130Z).